A 349-amino-acid polypeptide reads, in one-letter code: Ion-translocating oxidoreductase complex subunit D (349 aa).

3 helical membrane passes run 36–56, 77–99, and 124–144; these read CAFF…VALS, SAML…WMIV, and AMAA…SWIA. Thr185 is modified (FMN phosphoryl threonine). The next 5 helical transmembrane spans lie at 212–232, 239–259, 265–285, 291–311, and 315–335; these read GTGV…LVLL, WHIS…GFLL, ASPL…FIAT, ATSP…VYII, and GGYP…APFI.

The protein belongs to the NqrB/RnfD family. The complex is composed of six subunits: RnfA, RnfB, RnfC, RnfD, RnfE and RnfG. It depends on FMN as a cofactor.

It localises to the cell inner membrane. Its function is as follows. Part of a membrane-bound complex that couples electron transfer with translocation of ions across the membrane. The protein is Ion-translocating oxidoreductase complex subunit D of Shewanella sp. (strain ANA-3).